The chain runs to 458 residues: Retinoic acid receptor alpha (458 aa).

Residues 1–86 (MASNGGSCPS…PPPLPRIYKP (86 aa)) form a modulating region. The segment covering 54-68 (TPSPATIETQSTSSE) has biased composition (polar residues). The segment at 54–76 (TPSPATIETQSTSSEEIVPSPPS) is disordered. 2 consecutive NR C4-type zinc fingers follow at residues 87-107 (CFVC…CEGC) and 123-147 (CHRD…LQKC). The nuclear receptor DNA-binding region spans 87–152 (CFVCQDKSSG…RLQKCFEVGM (66 aa)). Residues 153–182 (SKESVRNDRNKKKKQEAPKQECTESYIITP) form a hinge region. Residues 183–417 (EVEDLVEKVR…PLIQEMLENS (235 aa)) enclose the NR LBD domain. Residues 408–416 (PLIQEMLEN) carry the 9aaTAD motif. Residues 417 to 458 (SEGLDSLTGQPPRASSLAPPPGSCSPSLSPSSNRSSPTSHSP) form a disordered region. Over residues 440 to 458 (CSPSLSPSSNRSSPTSHSP) the composition is skewed to low complexity.

The protein belongs to the nuclear hormone receptor family. NR1 subfamily. Heterodimer; with an rxr molecule. Binds DNA preferentially as a rar/rxr heterodimer. As to expression, expressed in forelimb, in the distal forelimb blastema, kidney, liver and hindlimb blastemal mesenchymal cells.

It is found in the nucleus. Functionally, receptor for retinoic acid. Retinoic acid receptors bind as heterodimers to their target response elements in response to their ligands, all-trans or 9-cis retinoic acid, and regulate gene expression in various biological processes. The rar/rxr heterodimers bind to the retinoic acid response elements (RARE) composed of tandem 5'-AGGTCA-3' sites known as DR1-DR5. Retinoic acid signaling appears to be involved in specifying proximal-distal axis in limb regeneration. In Notophthalmus viridescens (Eastern newt), this protein is Retinoic acid receptor alpha (RARA).